The primary structure comprises 295 residues: NAD kinase (295 aa).

Residue Asp-74 is the Proton acceptor of the active site. Residues Asp-74–Gly-75, Asn-148–Asp-149, His-159, Arg-176, Asp-178, and Thr-189–Ser-194 each bind NAD(+).

This sequence belongs to the NAD kinase family. A divalent metal cation is required as a cofactor.

The protein resides in the cytoplasm. The enzyme catalyses NAD(+) + ATP = ADP + NADP(+) + H(+). Involved in the regulation of the intracellular balance of NAD and NADP, and is a key enzyme in the biosynthesis of NADP. Catalyzes specifically the phosphorylation on 2'-hydroxyl of the adenosine moiety of NAD to yield NADP. This is NAD kinase from Legionella pneumophila (strain Paris).